Reading from the N-terminus, the 314-residue chain is Protein nutcracker (314 aa).

Residues 1–62 form a disordered region; it reads MSDTKSEIEG…PRLIQEKSTQ (62 aa). A compositionally biased stretch (low complexity) spans 21–34; it reads QQQQQPQQQQNEQQ. The tract at residues 257–314 is required for interaction with skpA and Cul1, but not with PI31; that stretch reads MQMEMKLQPSLLGLPDELYFEIFRYLDKSQLNVVARVNRHLHFYSKEVERKRLKGGRS. Positions 264 to 309 constitute an F-box domain; the sequence is QPSLLGLPDELYFEIFRYLDKSQLNVVARVNRHLHFYSKEVERKRL.

Component of an SCF (SKP1-CUL1-F-box protein) E3 ubiquitin-protein ligase complex, at least composed of ntc, skpA and Cul1. Interacts (via F-box domain) with skpA and Cul1. Interacts with Prosalpha7 and PI31. Interacts with Bruce. As to expression, expressed in testis (at protein level).

Its subcellular location is the cytoplasm. Functions together with PI31 to control non-apoptotic caspase activation during sperm individualization. Positively regulates PI31 stability. This is Protein nutcracker from Drosophila melanogaster (Fruit fly).